Reading from the N-terminus, the 941-residue chain is Isoleucine--tRNA ligase (941 aa).

A 'HIGH' region motif is present at residues 58–68 (PYANGNIHLGH). Glu564 serves as a coordination point for L-isoleucyl-5'-AMP. The short motif at 605–609 (KMSKS) is the 'KMSKS' region element. Lys608 contributes to the ATP binding site. Zn(2+) is bound by residues Cys904, Cys907, Cys924, and Cys927.

The protein belongs to the class-I aminoacyl-tRNA synthetase family. IleS type 1 subfamily. As to quaternary structure, monomer. Requires Zn(2+) as cofactor.

The protein resides in the cytoplasm. The catalysed reaction is tRNA(Ile) + L-isoleucine + ATP = L-isoleucyl-tRNA(Ile) + AMP + diphosphate. Its function is as follows. Catalyzes the attachment of isoleucine to tRNA(Ile). As IleRS can inadvertently accommodate and process structurally similar amino acids such as valine, to avoid such errors it has two additional distinct tRNA(Ile)-dependent editing activities. One activity is designated as 'pretransfer' editing and involves the hydrolysis of activated Val-AMP. The other activity is designated 'posttransfer' editing and involves deacylation of mischarged Val-tRNA(Ile). This is Isoleucine--tRNA ligase from Hahella chejuensis (strain KCTC 2396).